Here is a 175-residue protein sequence, read N- to C-terminus: Transcription factor E (175 aa).

The HTH TFE/IIEalpha-type domain occupies 8–90 (NDPVIQKYLH…LWTFQYENIP (83 aa)).

This sequence belongs to the TFE family. As to quaternary structure, monomer. Interaction with RNA polymerase subunits RpoF and RpoE is necessary for Tfe stimulatory transcription activity. Able to interact with Tbp and RNA polymerase in the absence of DNA promoter. Interacts both with the preinitiation and elongation complexes.

Its function is as follows. Transcription factor that plays a role in the activation of archaeal genes transcribed by RNA polymerase. Facilitates transcription initiation by enhancing TATA-box recognition by TATA-box-binding protein (Tbp), and transcription factor B (Tfb) and RNA polymerase recruitment. Not absolutely required for transcription in vitro, but particularly important in cases where Tbp or Tfb function is not optimal. It dynamically alters the nucleic acid-binding properties of RNA polymerases by stabilizing the initiation complex and destabilizing elongation complexes. Seems to translocate with the RNA polymerase following initiation and acts by binding to the non template strand of the transcription bubble in elongation complexes. The sequence is that of Transcription factor E from Natronomonas pharaonis (strain ATCC 35678 / DSM 2160 / CIP 103997 / JCM 8858 / NBRC 14720 / NCIMB 2260 / Gabara) (Halobacterium pharaonis).